Here is a 162-residue protein sequence, read N- to C-terminus: Flagellar assembly factor FliW (162 aa).

It belongs to the FliW family. As to quaternary structure, interacts with translational regulator CsrA and flagellin(s).

It localises to the cytoplasm. Acts as an anti-CsrA protein, binds CsrA and prevents it from repressing translation of its target genes, one of which is flagellin. Binds to flagellin and participates in the assembly of the flagellum. The protein is Flagellar assembly factor FliW of Alkaliphilus metalliredigens (strain QYMF).